The chain runs to 381 residues: Glucose-1-phosphate adenylyltransferase (381 aa).

Alpha-D-glucose 1-phosphate contacts are provided by residues Y100, G165, 180-181 (EK), and S191.

This sequence belongs to the bacterial/plant glucose-1-phosphate adenylyltransferase family. As to quaternary structure, homotetramer.

It catalyses the reaction alpha-D-glucose 1-phosphate + ATP + H(+) = ADP-alpha-D-glucose + diphosphate. It functions in the pathway glycan biosynthesis; glycogen biosynthesis. Its function is as follows. Involved in the biosynthesis of ADP-glucose, a building block required for the elongation reactions to produce glycogen. Catalyzes the reaction between ATP and alpha-D-glucose 1-phosphate (G1P) to produce pyrophosphate and ADP-Glc. This is Glucose-1-phosphate adenylyltransferase from Mycoplasma mobile (strain ATCC 43663 / 163K / NCTC 11711) (Mesomycoplasma mobile).